The sequence spans 350 residues: 2,5-dihydroxypyridine 5,6-dioxygenase (350 aa).

H265, H318, and D320 together coordinate Fe cation.

It depends on Fe(2+) as a cofactor.

The catalysed reaction is 2,5-dihydroxypyridine + O2 = N-formylmaleamate + H(+). Its pathway is cofactor degradation; nicotinate degradation. Its function is as follows. Catalyzes the dioxygenolytic ring cleavage of 2,5-dihydroxypyridine between carbons 5 and 6 generating N-formylmaleamate in the aerobic nicotinate degradation pathway. The sequence is that of 2,5-dihydroxypyridine 5,6-dioxygenase (nicX) from Pseudomonas putida (strain ATCC 47054 / DSM 6125 / CFBP 8728 / NCIMB 11950 / KT2440).